A 249-amino-acid chain; its full sequence is Very-long-chain (3R)-3-hydroxyacyl-CoA dehydratase 1 (249 aa).

The interval 1 to 22 is disordered; that stretch reads MASSEEDGTNGGASEAGEEKEA. Residues 1 to 36 lie on the Cytoplasmic side of the membrane; sequence MASSEEDGTNGGASEAGEEKEAPGRRRRLGLLATVW. Residues 37–56 traverse the membrane as a helical segment; it reads LTFYNIAMTAGWLVLAIAMV. Topologically, residues 57–75 are lumenal; the sequence is RFYMEKGTHKGLYKSIQKT. Residues 76–92 form a helical membrane-spanning segment; that stretch reads LKFFQTFALLEIVHCLI. Over 93–102 the chain is Cytoplasmic; the sequence is GIVPTSVIVA. The chain crosses the membrane as a helical span at residues 103–120; it reads GVQVSSRIFMVWLITHSI. At 121–126 the chain is on the lumenal side; it reads KPIQNE. Residues 127-141 traverse the membrane as a helical segment; sequence ESVVLFLVAWTVTEI. The Cytoplasmic segment spans residues 142–164; the sequence is TRYSFYTFSLLDHLPYFIKWARY. A helical membrane pass occupies residues 165-182; sequence NFFIILYPVGVVGELLTI. Residues tyrosine 171 and glutamate 178 contribute to the active site. The Lumenal portion of the chain corresponds to 183–212; the sequence is YAALPYVKKTGMFSIRLPNKYNVSFDYYYF. The N-linked (GlcNAc...) asparagine glycan is linked to asparagine 204. A helical transmembrane segment spans residues 213 to 230; it reads LLITMASYIPLFPQLYFH. Residues 231–249 are Cytoplasmic-facing; it reads MLRQRRKVLHGEVIVEKDD.

This sequence belongs to the very long-chain fatty acids dehydratase HACD family. May interact with enzymes of the ELO family (including ELOVL1); with those enzymes that mediate condensation, the first of the four steps of the reaction cycle responsible for fatty acids elongation, may be part of a larger fatty acids elongase complex. Interacts with TECR. Skeletal muscle.

Its subcellular location is the endoplasmic reticulum membrane. The catalysed reaction is a very-long-chain (3R)-3-hydroxyacyl-CoA = a very-long-chain (2E)-enoyl-CoA + H2O. The enzyme catalyses (3R)-hydroxyhexadecanoyl-CoA = (2E)-hexadecenoyl-CoA + H2O. It carries out the reaction (3R)-hydroxyoctadecanoyl-CoA = (2E)-octadecenoyl-CoA + H2O. It catalyses the reaction (3R)-hydroxyeicosanoyl-CoA = (2E)-eicosenoyl-CoA + H2O. The catalysed reaction is (3R)-hydroxydocosanoyl-CoA = (2E)-docosenoyl-CoA + H2O. The enzyme catalyses (3R)-hydroxytetracosanoyl-CoA = (2E)-tetracosenoyl-CoA + H2O. It carries out the reaction (3R)-hydroxyhexacosanoyl-CoA = (2E)-hexacosenoyl-CoA + H2O. The protein operates within lipid metabolism; fatty acid biosynthesis. In terms of biological role, catalyzes the third of the four reactions of the long-chain fatty acids elongation cycle. This endoplasmic reticulum-bound enzymatic process, allows the addition of two carbons to the chain of long- and very long-chain fatty acids/VLCFAs per cycle. This enzyme catalyzes the dehydration of the 3-hydroxyacyl-CoA intermediate into trans-2,3-enoyl-CoA, within each cycle of fatty acid elongation. Thereby, it participates in the production of VLCFAs of different chain lengths that are involved in multiple biological processes as precursors of membrane lipids and lipid mediators. This chain is Very-long-chain (3R)-3-hydroxyacyl-CoA dehydratase 1 (HACD1), found in Canis lupus familiaris (Dog).